The sequence spans 569 residues: RNA demethylase ALKBH10B (569 aa).

A coiled-coil region spans residues 118–151; sequence QKVAAKKAEDLKQKKTEEEAEEDLKEVVATEEEE. The interval 164–190 is disordered; that stretch reads ENDVNGDVEDVEDDSPTSDITDSGSHQ. Positions 167-179 are enriched in acidic residues; the sequence is VNGDVEDVEDDSP. Over residues 180–189 the composition is skewed to polar residues; sequence TSDITDSGSH. Fe cation-binding residues include His366, Glu368, and His421. 2-oxoglutarate is bound at residue Arg430. Residues 531–545 are compositionally biased toward basic residues; it reads KHVKHLPPRAQKKRL. The disordered stretch occupies residues 531-569; it reads KHVKHLPPRAQKKRLLPLPPAASSSPAGGSTSEPVITVG. Low complexity predominate over residues 551–560; the sequence is AASSSPAGGS.

Belongs to the alkB family. The cofactor is Fe(2+).

The enzyme catalyses an N(6)-methyladenosine in mRNA + 2-oxoglutarate + O2 = an adenosine in mRNA + formaldehyde + succinate + CO2. Dioxygenase that demethylates RNA by oxidative demethylation: specifically demethylates N(6)-methyladenosine (m6A) RNA, the most prevalent internal modification of messenger RNA (mRNA) in higher eukaryotes. ALKBH10B-mediated mRNA m6A demethylation stabilizes the mRNA of the key flowering time regulators FT, SPL3 and SPL9, which are involved in the control of floral transition. The protein is RNA demethylase ALKBH10B of Arabidopsis thaliana (Mouse-ear cress).